The primary structure comprises 111 residues: Small ribosomal subunit protein bS16 (111 aa).

It belongs to the bacterial ribosomal protein bS16 family.

The chain is Small ribosomal subunit protein bS16 from Rickettsia felis (strain ATCC VR-1525 / URRWXCal2) (Rickettsia azadi).